The chain runs to 583 residues: Radixin (583 aa).

Residues 5–295 (INVRVTTMDA…GNHELYMRRR (291 aa)) form the FERM domain. Residue 60–63 (KLNK) participates in a 1,2-diacyl-sn-glycero-3-phospho-(1D-myo-inositol) binding. Lys83 is subject to N6-succinyllysine. Lys278 contacts a 1,2-diacyl-sn-glycero-3-phospho-(1D-myo-inositol). Disordered stretches follow at residues 310 to 336 (REEK…AEKE), 374 to 407 (ELDQ…AKQA), and 458 to 526 (KTKE…RVNK). Residues 374–400 (ELDQERKRAKEEAERLEKERRAAEEAK) are compositionally biased toward basic and acidic residues. Pro residues predominate over residues 469–480 (APPPPPPPPVVP). Composition is skewed to basic and acidic residues over residues 483–492 (ENEHDEHDEN) and 506–525 (MNHR…ERVN). Thr564 is modified (phosphothreonine; by ROCK2).

In terms of assembly, interacts with CPNE1 (via VWFA domain) and CPNE4 (via VWFA domain). Binds NHERF1. Interacts with NHERF1, NHERF2, LAYN, MME/NEP and ICAM2. Interacts (via FERM domain) with SPN/CD43 cytoplasmic tail. Interacts with CD44. Interacts with CLIC5; may work together in a complex which also includes EZR and MYO6 to stabilize linkages between the plasma membrane and subjacent actin cytoskeleton at the base of stereocilia. Phosphorylated by tyrosine-protein kinases. Phosphorylation by ROCK2 suppresses the head-to-tail association of the N-terminal and C-terminal halves resulting in an opened conformation which is capable of actin and membrane-binding.

The protein localises to the cell membrane. It is found in the cytoplasm. The protein resides in the cytoskeleton. It localises to the cleavage furrow. Its subcellular location is the cell projection. The protein localises to the microvillus. It is found in the stereocilium. With respect to regulation, a head-to-tail association, of the N-terminal and C-terminal halves results in a closed conformation (inactive form) which is incapable of actin or membrane-binding. In terms of biological role, probably plays a crucial role in the binding of the barbed end of actin filaments to the plasma membrane. The chain is Radixin (RDX) from Sus scrofa (Pig).